The chain runs to 319 residues: Acetyl-coenzyme A carboxylase carboxyl transferase subunit alpha (319 aa).

The 255-residue stretch at 39–293 (RLQKKSNDLT…KAVLEKQLHE (255 aa)) folds into the CoA carboxyltransferase C-terminal domain.

Belongs to the AccA family. Acetyl-CoA carboxylase is a heterohexamer composed of biotin carboxyl carrier protein (AccB), biotin carboxylase (AccC) and two subunits each of ACCase subunit alpha (AccA) and ACCase subunit beta (AccD).

It is found in the cytoplasm. It carries out the reaction N(6)-carboxybiotinyl-L-lysyl-[protein] + acetyl-CoA = N(6)-biotinyl-L-lysyl-[protein] + malonyl-CoA. The protein operates within lipid metabolism; malonyl-CoA biosynthesis; malonyl-CoA from acetyl-CoA: step 1/1. Component of the acetyl coenzyme A carboxylase (ACC) complex. First, biotin carboxylase catalyzes the carboxylation of biotin on its carrier protein (BCCP) and then the CO(2) group is transferred by the carboxyltransferase to acetyl-CoA to form malonyl-CoA. In Neisseria meningitidis serogroup C (strain 053442), this protein is Acetyl-coenzyme A carboxylase carboxyl transferase subunit alpha.